Consider the following 1273-residue polypeptide: Lysine-specific histone demethylase 2 (1273 aa).

Positions 199-230 (ENFFDANSPSSQQFPSTYPSRSQNPLSSSGDG) are enriched in polar residues. The segment at 199-237 (ENFFDANSPSSQQFPSTYPSRSQNPLSSSGDGSTAIHAG) is disordered. Residues 247-307 (FSNYPYPLDA…LSKSVDNAVL (61 aa)) are a coiled coil. One can recognise an SWIRM domain in the interval 394–490 (AAEAARKCNL…YGCLSFDSSF (97 aa)). FAD-binding positions include 509–551 (IAVV…ILEA), Thr517, Glu550, Arg558, and 572–573 (TQ). A demethylase activity region spans residues 542-1198 (LPPKVIILEA…GKILRYQRLT (657 aa)). Positions 571-596 (ATQINHHTSNSNSISSNSTSLNPKDV) are disordered. Over residues 574–590 (INHHTSNSNSISSNSTS) the composition is skewed to low complexity. Residues 681-767 (SVRISWISQF…NTVDTDFSKD (87 aa)) are a coiled coil. A DNA-binding region (HMG box) is located at residues 1115-1195 (SKPNANPFLL…AYAGKILRYQ (81 aa)). FAD contacts are provided by residues Asp1147 and 1156–1157 (ET). A disordered region spans residues 1215-1273 (KCQDEPIPDDEARLFMQAQREEEQRKQTQDDNISKSREASDEEYHDDGSSDSGYNGTRY). Positions 1233–1253 (QREEEQRKQTQDDNISKSREA) are enriched in basic and acidic residues. Residues 1264 to 1273 (SDSGYNGTRY) show a composition bias toward polar residues.

Belongs to the flavin monoamine oxidase family. Component of the SWM histone demethylase complex composed of at least lsd1, lsd2, phf1 and phf2. Interacts directly with lsd1. It depends on FAD as a cofactor.

Its subcellular location is the nucleus. In terms of biological role, catalytic component of the SWM histone demethylase complex that specifically demethylates H3K9me2, a specific tag for epigenetic transcriptional activation, thereby acting as a corepressor. Acts by oxidizing the substrate by FAD to generate the corresponding imine that is subsequently hydrolyzed. Has a role in regulating heterochromatin propagation and euchromatic transcription. Also has a gene activating role. This is Lysine-specific histone demethylase 2 (lsd2) from Schizosaccharomyces pombe (strain 972 / ATCC 24843) (Fission yeast).